A 158-amino-acid chain; its full sequence is NAD(P)H-quinone oxidoreductase subunit J, chloroplastic (158 aa).

It belongs to the complex I 30 kDa subunit family. NDH is composed of at least 16 different subunits, 5 of which are encoded in the nucleus.

It is found in the plastid. The protein localises to the chloroplast thylakoid membrane. The catalysed reaction is a plastoquinone + NADH + (n+1) H(+)(in) = a plastoquinol + NAD(+) + n H(+)(out). The enzyme catalyses a plastoquinone + NADPH + (n+1) H(+)(in) = a plastoquinol + NADP(+) + n H(+)(out). Functionally, NDH shuttles electrons from NAD(P)H:plastoquinone, via FMN and iron-sulfur (Fe-S) centers, to quinones in the photosynthetic chain and possibly in a chloroplast respiratory chain. The immediate electron acceptor for the enzyme in this species is believed to be plastoquinone. Couples the redox reaction to proton translocation, and thus conserves the redox energy in a proton gradient. This Solanum lycopersicum (Tomato) protein is NAD(P)H-quinone oxidoreductase subunit J, chloroplastic.